The primary structure comprises 504 residues: Bacterial leucyl aminopeptidase (504 aa).

The signal sequence occupies residues 1 to 21 (MKYTKTLLAMVLSATFCQAYA). Residues 22-106 (EDKVWISIGA…AMPTTLASFV (85 aa)) constitute a propeptide that is removed on maturation. Residues H203, D223, E258, and D285 each coordinate Zn(2+). Cysteines 329 and 333 form a disulfide. Residue H362 coordinates Zn(2+). The propeptide at 406 to 504 (LEDGVPVTDL…SGASLKASTF (99 aa)) is removed in mature form.

This sequence belongs to the peptidase M28 family. M28E subfamily. It depends on Zn(2+) as a cofactor.

It localises to the secreted. The catalysed reaction is Release of an N-terminal amino acid, preferentially leucine, but not glutamic or aspartic acids.. This chain is Bacterial leucyl aminopeptidase, found in Vibrio proteolyticus (Aeromonas proteolytica).